Consider the following 340-residue polypeptide: Ubiquitin-like domain-containing CTD phosphatase (340 aa).

Residues 24–101 (LTLTVKWNGK…MTMIGTVEDD (78 aa)) enclose the Ubiquitin-like domain. The 162-residue stretch at 151–312 (CRQGKKLLVL…VKLTQYLLTI (162 aa)) folds into the FCP1 homology domain. The tract at residues 151–312 (CRQGKKLLVL…VKLTQYLLTI (162 aa)) is phosphatase. Mg(2+) is bound by residues D161, D163, and D271.

Mg(2+) serves as cofactor.

Its subcellular location is the nucleus. It catalyses the reaction O-phospho-L-seryl-[protein] + H2O = L-seryl-[protein] + phosphate. The catalysed reaction is O-phospho-L-threonyl-[protein] + H2O = L-threonyl-[protein] + phosphate. Dephosphorylates 26S nuclear proteasomes, thereby decreasing their proteolytic activity. The dephosphorylation may prevent assembly of the core and regulatory particles (CP and RP) into mature 26S proteasome. This is Ubiquitin-like domain-containing CTD phosphatase from Arabidopsis thaliana (Mouse-ear cress).